The following is a 167-amino-acid chain: UPF0225 protein VV1_2912 (167 aa).

This sequence belongs to the UPF0225 family.

The sequence is that of UPF0225 protein VV1_2912 from Vibrio vulnificus (strain CMCP6).